The chain runs to 361 residues: Mannose-1-phosphate guanyltransferase (361 aa).

This sequence belongs to the transferase hexapeptide repeat family.

The protein resides in the cytoplasm. The catalysed reaction is alpha-D-mannose 1-phosphate + GTP + H(+) = GDP-alpha-D-mannose + diphosphate. The protein operates within nucleotide-sugar biosynthesis; GDP-alpha-D-mannose biosynthesis; GDP-alpha-D-mannose from alpha-D-mannose 1-phosphate (GTP route): step 1/1. Its function is as follows. Involved in cell wall synthesis where it is required for glycosylation. Involved in cell cycle progression through cell-size checkpoint. The chain is Mannose-1-phosphate guanyltransferase (MPG1) from Kluyveromyces lactis (strain ATCC 8585 / CBS 2359 / DSM 70799 / NBRC 1267 / NRRL Y-1140 / WM37) (Yeast).